A 170-amino-acid chain; its full sequence is Shikimate kinase (170 aa).

11–16 (GAGKTT) lines the ATP pocket. Threonine 15 lines the Mg(2+) pocket. Residues aspartate 33, arginine 57, and glycine 80 each coordinate substrate. Arginine 119 is a binding site for ATP. Arginine 141 serves as a coordination point for substrate.

The protein belongs to the shikimate kinase family. As to quaternary structure, monomer. The cofactor is Mg(2+).

Its subcellular location is the cytoplasm. It catalyses the reaction shikimate + ATP = 3-phosphoshikimate + ADP + H(+). Its pathway is metabolic intermediate biosynthesis; chorismate biosynthesis; chorismate from D-erythrose 4-phosphate and phosphoenolpyruvate: step 5/7. Functionally, catalyzes the specific phosphorylation of the 3-hydroxyl group of shikimic acid using ATP as a cosubstrate. The polypeptide is Shikimate kinase (Azobacteroides pseudotrichonymphae genomovar. CFP2).